Reading from the N-terminus, the 257-residue chain is MWQLLSPTALLLLVSVPGTHAEDPPKSVVILDPPWDRLLEKDSVTLKCQGAYPPRDDSTEWRWNGTLISNKASSYSITDATVGNSGEYTCKTGLSAQSDPLRLEVYKGWLLLQAPRWVVQEGESIRLRCHTWKNITIQKVQYFQNGMGKKFSHQNFEYHIPNATLKDGGSYFCRGIIKNYDLSSEPVKVTVQGSKSPSPILSFFLPWHQIIFCLVMGFLFAVDTGLYFSVRKVLRSSKEDWRNGKVTWSRDPADKGG.

The first 19 residues, 1-19 (MWQLLSPTALLLLVSVPGT), serve as a signal peptide directing secretion. Residues 20–209 (HAEDPPKSVV…ILSFFLPWHQ (190 aa)) are Extracellular-facing. Ig-like C2-type domains lie at 25-104 (PKSV…LRLE) and 108-190 (GWLL…VKVT). Intrachain disulfides connect Cys48–Cys90 and Cys129–Cys173. Asn64, Asn134, and Asn162 each carry an N-linked (GlcNAc...) asparagine glycan. N-linked (GlcNAc...) asparagine; in variant N-181 glycosylation is present at Asp181. A helical membrane pass occupies residues 210-230 (IIFCLVMGFLFAVDTGLYFSV). The Cytoplasmic portion of the chain corresponds to 231–257 (RKVLRSSKEDWRNGKVTWSRDPADKGG).

In terms of assembly, forms a heterooligomeric complex with ITAM-containing signaling subunits FCER1G. Interacts (via transmembrane domain) with signaling subunits; this interaction is a prerequisite for receptor complex expression on the cell surface and intracellular signal transduction. Binds the Fc region of antigen-complexed IgG. As to expression, expressed in polymorphonuclear leukocytes, pulmonary alveolar macrophages and peripheral blood mononuclear cells (at protein level). Found in spleen, and at very low levels in lymph nodes but not in thymus or liver.

It is found in the cell membrane. Receptor for the invariable Fc fragment of immunoglobulin gamma (IgG). Optimally activated upon binding of clustered antigen-IgG complexes displayed on cell surfaces, triggers lysis of antibody-coated cells, a process known as antibody-dependent cellular cytotoxicity (ADCC). Does not bind free monomeric IgG, thus avoiding inappropriate effector cell activation in the absence of antigenic trigger. Mediates IgG effector functions on natural killer (NK) cells. Binds antigen-IgG complexes generated upon infection and triggers NK cell-dependent cytokine production and degranulation to limit viral load and propagation. Fc-binding subunit that associates with FCER1G adapter to form functional signaling complexes. Following the engagement of antigen-IgG complexes, triggers phosphorylation of immunoreceptor tyrosine-based activation motif (ITAM)-containing adapter with subsequent activation of phosphatidylinositol 3-kinase signaling and sustained elevation of intracellular calcium that ultimately drive NK cell activation. Mediates enhanced ADCC in response to afucosylated IgGs. The sequence is that of Low affinity immunoglobulin gamma Fc region receptor III-A from Sus scrofa (Pig).